The following is a 341-amino-acid chain: Phenylalanine--tRNA ligase alpha subunit (341 aa).

Glu256 provides a ligand contact to Mg(2+).

This sequence belongs to the class-II aminoacyl-tRNA synthetase family. Phe-tRNA synthetase alpha subunit type 1 subfamily. Tetramer of two alpha and two beta subunits. The cofactor is Mg(2+).

It localises to the cytoplasm. The enzyme catalyses tRNA(Phe) + L-phenylalanine + ATP = L-phenylalanyl-tRNA(Phe) + AMP + diphosphate + H(+). The protein is Phenylalanine--tRNA ligase alpha subunit of Clostridium perfringens (strain 13 / Type A).